The sequence spans 396 residues: S-adenosylmethionine synthase 3 (396 aa).

Residue glutamate 13 participates in Mg(2+) binding. Histidine 19 serves as a coordination point for ATP. Glutamate 47 is a binding site for K(+). Residues glutamate 60 and glutamine 103 each contribute to the L-methionine site. ATP-binding positions include 171 to 173 (DGK), 239 to 242 (SGRF), aspartate 250, 256 to 257 (RK), alanine 273, lysine 277, and lysine 281. Aspartate 250 serves as a coordination point for L-methionine. L-methionine is bound at residue lysine 281.

The protein belongs to the AdoMet synthase family. In terms of assembly, homotetramer. Mn(2+) is required as a cofactor. Requires Mg(2+) as cofactor. Co(2+) serves as cofactor. It depends on K(+) as a cofactor. As to expression, expressed in roots, stems and leaves (at protein level).

The protein resides in the cytoplasm. The enzyme catalyses L-methionine + ATP + H2O = S-adenosyl-L-methionine + phosphate + diphosphate. It participates in amino-acid biosynthesis; S-adenosyl-L-methionine biosynthesis; S-adenosyl-L-methionine from L-methionine: step 1/1. Functionally, catalyzes the formation of S-adenosylmethionine from methionine and ATP. The reaction comprises two steps that are both catalyzed by the same enzyme: formation of S-adenosylmethionine (AdoMet) and triphosphate, and subsequent hydrolysis of the triphosphate. May be involved in the synthesis of betain in response to abiotic stress such as high salinity. The chain is S-adenosylmethionine synthase 3 (SAMS3) from Atriplex nummularia (Old man saltbush).